The primary structure comprises 80 residues: Trefoil factor 3 (80 aa).

Positions 1–21 (MAARALCMLGLVLALLSSSSA) are cleaved as a signal peptide. The P-type domain occupies 30 to 73 (NQCAVPAKDRVDCGYPHVTPKECNNRGCCFDSRIPGVPWCFKPL). Cystine bridges form between Cys32-Cys58, Cys42-Cys57, and Cys52-Cys69.

Monomer. Homodimer; disulfide-linked. In terms of tissue distribution, expressed in goblet cells of the intestines and colon (at protein level). Expressed by goblet cells of small and large intestinal epithelia and also by the uterus. Also expressed in the hypothalamus where it is detected in paraventricular, periventricular and supraoptic nuclei (at protein level).

The protein localises to the secreted. It localises to the extracellular space. It is found in the extracellular matrix. Its subcellular location is the cytoplasm. Functionally, involved in the maintenance and repair of the intestinal mucosa. Promotes the mobility of epithelial cells in healing processes (motogen). In Homo sapiens (Human), this protein is Trefoil factor 3 (TFF3).